The following is a 142-amino-acid chain: Nucleoside diphosphate kinase (142 aa).

ATP contacts are provided by Lys-11, Phe-59, Arg-87, Thr-93, Arg-104, and Asn-114. The active-site Pros-phosphohistidine intermediate is His-117.

It belongs to the NDK family. As to quaternary structure, homotetramer. Requires Mg(2+) as cofactor.

The protein resides in the cytoplasm. The catalysed reaction is dZDP + ATP = dZTP + ADP. It carries out the reaction a 2'-deoxyribonucleoside 5'-diphosphate + ATP = a 2'-deoxyribonucleoside 5'-triphosphate + ADP. It catalyses the reaction a ribonucleoside 5'-diphosphate + ATP = a ribonucleoside 5'-triphosphate + ADP. It participates in purine metabolism. In terms of biological role, major role in the synthesis of nucleoside triphosphates other than ATP. The ATP gamma phosphate is transferred to the NDP beta phosphate via a ping-pong mechanism, using a phosphorylated active-site intermediate. (Microbial infection) Catalyzes the phosphorylation of dZDP to dZTP, when the bacterium is infected by a phage that produces the substrate for the synthesis of dZTP (2- amino-2'-deoxyadenosine 5'-triphosphate), which is then used by the phage as a DNA polymerase substrate. The polypeptide is Nucleoside diphosphate kinase (Vibrio cholerae serotype O1 (strain ATCC 39315 / El Tor Inaba N16961)).